Reading from the N-terminus, the 728-residue chain is Lanosterol synthase (728 aa).

A PFTB 1 repeat occupies 117–159 (RVEMIRYIVNTAHPVDGGWGLHSVDKSTCFGTTMNYVCLRLLG). D450 (proton donor) is an active-site residue. PFTB repeat units lie at residues 561–602 (ISSA…HTVG) and 611–657 (VKKG…ALIG).

This sequence belongs to the terpene cyclase/mutase family.

The protein localises to the lipid droplet. Its subcellular location is the endoplasmic reticulum membrane. The catalysed reaction is (S)-2,3-epoxysqualene = lanosterol. The protein operates within terpene metabolism; lanosterol biosynthesis; lanosterol from farnesyl diphosphate: step 3/3. In terms of biological role, lanosterol synthase; part of the third module of ergosterol biosynthesis pathway that includes the late steps of the pathway. ERG7 catalyzes the cyclization of (S)-2,3 oxidosqualene to lanosterol, a reaction that forms the sterol core. The third module or late pathway involves the ergosterol synthesis itself through consecutive reactions that mainly occur in the endoplasmic reticulum (ER) membrane. Firstly, the squalene synthase ERG9 catalyzes the condensation of 2 farnesyl pyrophosphate moieties to form squalene, which is the precursor of all steroids. Squalene synthase is crucial for balancing the incorporation of farnesyl diphosphate (FPP) into sterol and nonsterol isoprene synthesis. Secondly, the squalene epoxidase ERG1 catalyzes the stereospecific oxidation of squalene to (S)-2,3-epoxysqualene, which is considered to be a rate-limiting enzyme in steroid biosynthesis. Then, the lanosterol synthase ERG7 catalyzes the cyclization of (S)-2,3 oxidosqualene to lanosterol, a reaction that forms the sterol core. In the next steps, lanosterol is transformed to zymosterol through a complex process involving various demethylation, reduction and desaturation reactions. The lanosterol 14-alpha-demethylase ERG11 (also known as CYP51) catalyzes C14-demethylation of lanosterol to produce 4,4'-dimethyl cholesta-8,14,24-triene-3-beta-ol, which is critical for ergosterol biosynthesis. The C-14 reductase ERG24 reduces the C14=C15 double bond of 4,4-dimethyl-cholesta-8,14,24-trienol to produce 4,4-dimethyl-cholesta-8,24-dienol. 4,4-dimethyl-cholesta-8,24-dienol is substrate of the C-4 demethylation complex ERG25-ERG26-ERG27 in which ERG25 catalyzes the three-step monooxygenation required for the demethylation of 4,4-dimethyl and 4alpha-methylsterols, ERG26 catalyzes the oxidative decarboxylation that results in a reduction of the 3-beta-hydroxy group at the C-3 carbon to an oxo group, and ERG27 is responsible for the reduction of the keto group on the C-3. ERG28 has a role as a scaffold to help anchor ERG25, ERG26 and ERG27 to the endoplasmic reticulum and ERG29 regulates the activity of the iron-containing C4-methylsterol oxidase ERG25. Then, the sterol 24-C-methyltransferase ERG6 catalyzes the methyl transfer from S-adenosyl-methionine to the C-24 of zymosterol to form fecosterol. The C-8 sterol isomerase ERG2 catalyzes the reaction which results in unsaturation at C-7 in the B ring of sterols and thus converts fecosterol to episterol. The sterol-C5-desaturase ERG3 then catalyzes the introduction of a C-5 double bond in the B ring to produce 5-dehydroepisterol. The C-22 sterol desaturase ERG5 further converts 5-dehydroepisterol into ergosta-5,7,22,24(28)-tetraen-3beta-ol by forming the C-22(23) double bond in the sterol side chain. Finally, ergosta-5,7,22,24(28)-tetraen-3beta-ol is substrate of the C-24(28) sterol reductase ERG4 to produce ergosterol. This chain is Lanosterol synthase, found in Candida albicans (strain SC5314 / ATCC MYA-2876) (Yeast).